Consider the following 187-residue polypeptide: Meiotically up-regulated gene 155 protein (187 aa).

A disordered region spans residues 1–24 (MRPTSGCSKDDTIQKQNRRHNTVD). Transmembrane regions (helical) follow at residues 83-105 (IISYHFISFHTIVVLLLLPPFSH) and 163-183 (VMLTKPKQFLFLLEFITLFIF).

The protein localises to the cytoplasm. Its subcellular location is the nucleus membrane. Has a role in meiosis. The protein is Meiotically up-regulated gene 155 protein (mug155) of Schizosaccharomyces pombe (strain 972 / ATCC 24843) (Fission yeast).